The sequence spans 216 residues: uncharacterized protein (216 aa).

It is found in the plastid. The protein localises to the chloroplast. This is an uncharacterized protein from Pyropia yezoensis (Susabi-nori).